The chain runs to 292 residues: Hypoxia responsive morphology factor A (292 aa).

The Bipartite nuclear localization signal motif lies at 48–70 (RRNGRRRNLEYVAQHRRKIARKI). The interval 156-186 (GKEHYSLHLSTLPAIRNAFGDVIFDAIERSP) is RNA recognition motif (RRM)-like domain.

This sequence belongs to the hrmA family.

The protein localises to the nucleus. Functionally, hypoxia responsive morphology factor that modulates the expression of the subtelomeric hrmA-associated cluster (HAC) containing genes that alter the hyphal surface (such as reduced total chitin or increased beta-glucan exposure) and perturb inter-hyphal interactions within the developing biofilms, resulting in a loss of vertically aligned polarized growing filaments. Consequently, this hypoxia-typic morphotype (called H-MORPH) with altered biofilm architecture leads to increased hypoxia fitness, increased host inflammation, rapid disease progression, and mortality in a murine model of invasive aspergillosis. The chain is Hypoxia responsive morphology factor A from Aspergillus fumigatus (strain CBS 144.89 / FGSC A1163 / CEA10) (Neosartorya fumigata).